Consider the following 118-residue polypeptide: MASQSQGIQQLLQAEKRAKDKLEEAKKRKNKRLRQAKEEATADIDQYRLKREADFRRIQTSVMGSQGNLAVKIEEQTVEKIQFYSSSYNKYKEGVLKELLDLAYNIKPELHTNYKYKI.

A coiled-coil region spans residues 3 to 54 (SQSQGIQQLLQAEKRAKDKLEEAKKRKNKRLRQAKEEATADIDQYRLKREAD). The interval 19-39 (KDKLEEAKKRKNKRLRQAKEE) is disordered.

This sequence belongs to the V-ATPase G subunit family. In terms of assembly, V-ATPase is a heteromultimeric enzyme made up of two complexes: the ATP-hydrolytic V1 complex and the proton translocation V0 complex. The V1 complex consists of three catalytic AB heterodimers that form a heterohexamer, three peripheral stalks each consisting of EG heterodimers, one central rotor including subunits D and F, and the regulatory subunits C and H. The proton translocation complex V0 consists of the proton transport subunit a, a ring of proteolipid subunits c9c'', rotary subunit d, subunits e and f, and two accessory subunits.

In terms of biological role, subunit of the V1 complex of vacuolar(H+)-ATPase (V-ATPase), a multisubunit enzyme composed of a peripheral complex (V1) that hydrolyzes ATP and a membrane integral complex (V0) that translocates protons. V-ATPase is responsible for acidifying and maintaining the pH of intracellular compartments and in some cell types, is targeted to the plasma membrane, where it is responsible for acidifying the extracellular environment. This is V-type proton ATPase subunit G 3 (atp6v1g3) from Xenopus laevis (African clawed frog).